The following is a 414-amino-acid chain: MSAPRRAVVTGLGVVAPHGIGAETFWKTAVDGTSSLARIDREGCGHLPLKIAGQVPDFDPAALIEDTYLVQTDRFTHFAMAATQLALDDARLSRADIDSPYSVGVVTAAGSGGGEFGQRELQKLWGQGSKYVGPYQSIAWFYAASTGQISIRGGFKGPCGVVAADEAGGLDALAHAALAVRRGTATVVAGATEAPLAPYSMVCQLGYPELSRSADPGRAYRPFTSAACGFVPAEGGAMFVLEEEGAARERGADARATVAGHAATFTGASRWEESRAGLAHAIGTALARAGCRPQDVDVVFADALGVPEADRAEALALADALGPHARRVPVTAPKAGIGRAFCAAAVLDVATALLAMEHELIPPTPHVLDVCHDLDLVVGRARPARPRTALVLSRGLMGNNSALVLRRGAAPFPE.

The Ketosynthase family 3 (KS3) domain maps to 4-407 (PRRAVVTGLG…GNNSALVLRR (404 aa)).

Belongs to the thiolase-like superfamily. Beta-ketoacyl-ACP synthases family.

Functionally, involved in developmentally regulated synthesis of a compound biosynthetically related to polyketide antibiotics which is essential for spore color in Streptomyces halstedii. This Streptomyces halstedii protein is Putative polyketide beta-ketoacyl synthase 2 (sch2).